A 342-amino-acid chain; its full sequence is Cell division protein ZipA (342 aa).

Residues 1-6 are Periplasmic-facing; the sequence is MEDLQL. Residues 7-27 traverse the membrane as a helical segment; that stretch reads VLFILGAIAIVAVLVHGFWSI. Over 28 to 342 the chain is Cytoplasmic; it reads RRQQPKSLKD…DYLHRIRANA (315 aa). Residues 33 to 57 are disordered; sequence KSLKDSPMGNFYKQQADKESPPKRV. Residues 47–57 are compositionally biased toward basic and acidic residues; the sequence is QADKESPPKRV.

It belongs to the ZipA family. Interacts with FtsZ via their C-terminal domains.

The protein resides in the cell inner membrane. Its function is as follows. Essential cell division protein that stabilizes the FtsZ protofilaments by cross-linking them and that serves as a cytoplasmic membrane anchor for the Z ring. Also required for the recruitment to the septal ring of downstream cell division proteins. The protein is Cell division protein ZipA of Shewanella sp. (strain W3-18-1).